We begin with the raw amino-acid sequence, 212 residues long: Hevein-like preproprotein (212 aa).

A signal peptide spans 1–21 (MKIRLSITIILLSYTVATVAG). The 43-residue stretch at 22 to 64 (QQCGRQGGGRTCPGNICCSQYGYCGTTADYCSPTNNCQSNCWG) folds into the Chitin-binding type-1 domain. Disulfide bonds link C24-C39, C33-C45, C38-C52, C58-C62, C100-C132, C121-C155, and C135-C191. Residues 72-193 (ESASNVRATY…VDYQFVDCGN (122 aa)) form the Barwin domain.

As to quaternary structure, CB-HEL interacts strongly with a fungal fruiting body lectin.

The protein localises to the vacuole. Functionally, fungal growth inhibitors. Neither CB-HEL nor CD-HEL have chitinase activity, but both have antimicrobial activities. CD-HEL has RNase, but no DNase activity. The sequence is that of Hevein-like preproprotein (HEL) from Arabidopsis thaliana (Mouse-ear cress).